The following is a 496-amino-acid chain: Probable diguanylate cyclase DgcJ (496 aa).

2 helical membrane-spanning segments follow: residues 11-31 (FIAA…LVAS) and 305-325 (ILYF…TALI). Residues 374–496 (SSVMFIAIDM…VNKQNKNSRS (123 aa)) form the GGDEF domain. Position 382 (Asp-382) interacts with Mg(2+). Residues Asn-390, His-395, and Asp-399 each contribute to the substrate site. Position 425 (Asp-425) interacts with Mg(2+). Asp-425 (proton acceptor) is an active-site residue.

Homodimer. It depends on Mg(2+) as a cofactor.

Its subcellular location is the cell inner membrane. It catalyses the reaction 2 GTP = 3',3'-c-di-GMP + 2 diphosphate. Its pathway is purine metabolism; 3',5'-cyclic di-GMP biosynthesis. Its function is as follows. Catalyzes the synthesis of cyclic-di-GMP (c-di-GMP) via the condensation of 2 GTP molecules. The sequence is that of Probable diguanylate cyclase DgcJ from Escherichia coli (strain K12).